The sequence spans 366 residues: MNLLETVEQDTMPTHYKQMTQVEMIARVTEIKAQLGENLFIPCHHYQKDEVVPFADAIGDSLQLAQIAAQNKKAKHIVFCGVHFMAETADMLTTSEQIVTLPDMRAGCSMADMADIHQLTNAWPKLQTLFGDTILPVTYINSTAAIKSFVGEHGGTTVTSSNATKIVSWALEQKERIFFLPDQHLGRNTAFELGIPLEHMAIWNPIKNELEYEGNLDDCKVILWKGYCSVHQHFTVKNIENIRKNHPNMRIIVHPECTHEVVSLADDSGSTKKIVTEINNAAPGTEWAVGTEANLVGRIIQENPDKKIVSLNPFMCPCMTMNRIDLPHLLWTLEAIQNGEKRNQIKVDEQTTKFALKALERMLQLS.

2 residues coordinate iminosuccinate: H44 and S61. C108 lines the [4Fe-4S] cluster pocket. Iminosuccinate is bound by residues 139–141 (YIN) and S160. C228 contributes to the [4Fe-4S] cluster binding site. Iminosuccinate contacts are provided by residues 254–256 (HPE) and T271. Residue C318 coordinates [4Fe-4S] cluster.

It belongs to the quinolinate synthase family. Type 3 subfamily. The cofactor is [4Fe-4S] cluster.

It is found in the cytoplasm. It carries out the reaction iminosuccinate + dihydroxyacetone phosphate = quinolinate + phosphate + 2 H2O + H(+). It participates in cofactor biosynthesis; NAD(+) biosynthesis; quinolinate from iminoaspartate: step 1/1. Catalyzes the condensation of iminoaspartate with dihydroxyacetone phosphate to form quinolinate. The chain is Quinolinate synthase from Listeria monocytogenes serovar 1/2a (strain ATCC BAA-679 / EGD-e).